Reading from the N-terminus, the 412-residue chain is Pentatricopeptide repeat-containing protein At3g60980, mitochondrial (412 aa).

The N-terminal 18 residues, 1 to 18 (MSLIGRLNLGRRFCTAVP), are a transit peptide targeting the mitochondrion. PPR repeat units lie at residues 69 to 104 (TTTI…NLRP), 105 to 139 (NSHC…GQVH), 143 to 178 (SDDS…TTYP), 179 to 213 (DHVA…FLIA), 230 to 264 (VAFL…NRLL), 266 to 296 (CAET…LLDK), 305 to 339 (DSDT…NDYL), 344 to 371 (IITR…DFGY), and 373 to 407 (DVNT…TLKE).

This sequence belongs to the PPR family. P subfamily.

It localises to the mitochondrion. The sequence is that of Pentatricopeptide repeat-containing protein At3g60980, mitochondrial from Arabidopsis thaliana (Mouse-ear cress).